The chain runs to 330 residues: Beta-1,6-galactofuranosyltransferase WbbI (330 aa).

The protein resides in the cytoplasm. It functions in the pathway bacterial outer membrane biogenesis; lipopolysaccharide biosynthesis. Functionally, involved in the transfer of galactofuranose (Galf) onto an alpha-D-gluco-configured acceptor substrate to form a beta-1,6-linkage. It uses n-octyl alpha-D-glucopyranoside as an acceptor substrate for the addition of galactofuranose from the donor substrate UDP-galactofuranose. It is not able to use beta-D-glucopyranoside isomers. The chain is Beta-1,6-galactofuranosyltransferase WbbI (wbbI) from Escherichia coli (strain K12).